A 228-amino-acid polypeptide reads, in one-letter code: FtsZ-localized protein A (228 aa).

The GST N-terminal domain maps to 3–85 (VERTLHHFPL…HIEETETEPP (83 aa)). Residues 90-223 (DPAERAEARR…WPGLAPAAHY (134 aa)) enclose the GST C-terminal domain.

Belongs to the GST superfamily. As to quaternary structure, homodimer. Interacts with FtsZ filaments. Probably interacts with the GTPase domain of FtsZ.

The protein localises to the cytoplasm. Its function is as follows. Essential cell division protein that must bind to FtsZ for division to occur. Critical coordinator of envelope constriction through its interaction with FtsZ. Promotes the formation of highly curved FtsZ filaments, reduces the GTPase activity of FtsZ and stabilizes FtsZ polymers. May regulate FtsZ function by modulating its superstructure. Does not bind to glutathione. The polypeptide is FtsZ-localized protein A (Caulobacter vibrioides (strain NA1000 / CB15N) (Caulobacter crescentus)).